The sequence spans 379 residues: CCN family member 1 (379 aa).

The signal sequence occupies residues 1-24 (MSSSTIKTLAVAVTLLHLTRLALS). An IGFBP N-terminal domain is found at 25–94 (TCPAACHCPL…TALKGICRAQ (70 aa)). Disulfide bonds link Cys-26/Cys-50, Cys-30/Cys-52, Cys-32/Cys-53, Cys-39/Cys-56, Cys-64/Cys-78, and Cys-70/Cys-91. One can recognise a VWFC domain in the interval 98-164 (RPCEYNSRIY…GQCCEEWVCD (67 aa)). Ser-184 is modified (phosphoserine). A TSP type-1 domain is found at 226–271 (KCIVQTTSWSQCSKSCGTGISTRVTNDNSECRLVKETRICEVRPCG). Residues 277–313 (SLKKGKKCSKTKKSPEPVRFTYAGCSSVKKYRPKYCG) form a heparin-binding region. Cystine bridges form between Cys-284–Cys-321, Cys-301–Cys-335, Cys-312–Cys-351, Cys-315–Cys-353, and Cys-320–Cys-357. The CTCK domain occupies 284–358 (CSKTKKSPEP…QSCKCNYNCP (75 aa)).

The protein belongs to the CCN family. Interaction with integrins is heparin- and cell-type-dependent and promotes cell adhesion.

The protein resides in the secreted. In terms of biological role, promotes cell proliferation, chemotaxis, angiogenesis and cell adhesion. Appears to play a role in wound healing by up-regulating, in skin fibroblasts, the expression of a number of genes involved in angiogenesis, inflammation and matrix remodeling including VEGA-A, VEGA-C, MMP1, MMP3, TIMP1, uPA, PAI-1 and integrins alpha-3 and alpha-5. CCN1-mediated gene regulation is dependent on heparin-binding. Down-regulates the expression of alpha-1 and alpha-2 subunits of collagen type-1. Promotes cell adhesion and adhesive signaling through integrin alpha-6/beta-1, cell migration through integrin alpha-1/beta-5 and cell proliferation through integrin alpha-v/beta-3. This is CCN family member 1 from Rattus norvegicus (Rat).